Consider the following 197-residue polypeptide: Holliday junction branch migration complex subunit RuvA (197 aa).

The domain I stretch occupies residues 1–64 (MYEYIKGKYI…EDFIGVYGFL (64 aa)). The domain II stretch occupies residues 65–144 (TKDELSMFKL…DILEEDDEQI (80 aa)). The interval 145 to 149 (INKVT) is flexible linker. Positions 149–197 (TDDKKVLEAVAALVTLGYSEKEANKVINSCDKNNSLEQIIKEALKYLMK) are domain III.

This sequence belongs to the RuvA family. In terms of assembly, homotetramer. Forms an RuvA(8)-RuvB(12)-Holliday junction (HJ) complex. HJ DNA is sandwiched between 2 RuvA tetramers; dsDNA enters through RuvA and exits via RuvB. An RuvB hexamer assembles on each DNA strand where it exits the tetramer. Each RuvB hexamer is contacted by two RuvA subunits (via domain III) on 2 adjacent RuvB subunits; this complex drives branch migration. In the full resolvosome a probable DNA-RuvA(4)-RuvB(12)-RuvC(2) complex forms which resolves the HJ.

The protein resides in the cytoplasm. The RuvA-RuvB-RuvC complex processes Holliday junction (HJ) DNA during genetic recombination and DNA repair, while the RuvA-RuvB complex plays an important role in the rescue of blocked DNA replication forks via replication fork reversal (RFR). RuvA specifically binds to HJ cruciform DNA, conferring on it an open structure. The RuvB hexamer acts as an ATP-dependent pump, pulling dsDNA into and through the RuvAB complex. HJ branch migration allows RuvC to scan DNA until it finds its consensus sequence, where it cleaves and resolves the cruciform DNA. This chain is Holliday junction branch migration complex subunit RuvA, found in Clostridium botulinum (strain Kyoto / Type A2).